The sequence spans 437 residues: Transcription factor AP-2-alpha (437 aa).

K10 is covalently cross-linked (Glycyl lysine isopeptide (Lys-Gly) (interchain with G-Cter in SUMO); alternate). K10 is covalently cross-linked (Glycyl lysine isopeptide (Lys-Gly) (interchain with G-Cter in SUMO2); alternate). Residues 14-107 (CEDRHDGTSN…GQRQSQESGL (94 aa)) form a disordered region. The PPxY motif motif lies at 57–62 (YFPPPY). 2 stretches are compositionally biased toward low complexity: residues 65–74 (IYPQSQDPYS) and 88–101 (QPQP…GQRQ). Residues K177 and K184 each participate in a glycyl lysine isopeptide (Lys-Gly) (interchain with G-Cter in SUMO2) cross-link. At S239 the chain carries Phosphoserine; by PKA. The tract at residues 280–410 (RRKAANVTLL…YLTEALKAMD (131 aa)) is H-S-H (helix-span-helix), dimerization. The span at 414–427 (LSNNPNSHTDNNAK) shows a compositional bias: polar residues. A disordered region spans residues 414-437 (LSNNPNSHTDNNAKSSDKEEKHRK). Positions 428–437 (SSDKEEKHRK) are enriched in basic and acidic residues.

The protein belongs to the AP-2 family. As to quaternary structure, binds DNA as a dimer. Can form homodimers or heterodimers with other AP-2 family members. Interacts with WWOX. Interacts with CITED4. Interacts with UBE2I. Interacts with RALBP1 in a complex also containing EPN1 and NUMB during interphase and mitosis. Interacts with KCTD1; this interaction represses transcription activation. Interacts (via C-terminus) with CITED2 (via C-terminus); the interaction stimulates TFAP2A-transcriptional activation. Interacts (via N-terminus) with EP300 (via N-terminus); the interaction requires CITED2. Interacts with KCTD15; this interaction inhibits TFAP2A transcriptional activation. In terms of processing, sumoylated on Lys-10; which inhibits transcriptional activity.

It localises to the nucleus. Its function is as follows. Sequence-specific DNA-binding protein that interacts with inducible viral and cellular enhancer elements to regulate transcription of selected genes. AP-2 factors bind to the consensus sequence 5'-GCCNNNGGC-3' and activate genes involved in a large spectrum of important biological functions including proper eye, face, body wall, limb and neural tube development. They also suppress a number of genes including MCAM/MUC18, C/EBP alpha and MYC. AP-2-alpha is the only AP-2 protein required for early morphogenesis of the lens vesicle. Together with the CITED2 coactivator, stimulates the PITX2 P1 promoter transcription activation. Associates with chromatin to the PITX2 P1 promoter region. The chain is Transcription factor AP-2-alpha (TFAP2A) from Homo sapiens (Human).